We begin with the raw amino-acid sequence, 274 residues long: Orotidine 5'-phosphate decarboxylase (274 aa).

The active-site Proton donor is the Lys-95.

Belongs to the OMP decarboxylase family. Type 2 subfamily.

The catalysed reaction is orotidine 5'-phosphate + H(+) = UMP + CO2. Its pathway is pyrimidine metabolism; UMP biosynthesis via de novo pathway; UMP from orotate: step 2/2. The polypeptide is Orotidine 5'-phosphate decarboxylase (Verminephrobacter eiseniae (strain EF01-2)).